A 314-amino-acid chain; its full sequence is MTVVPEGRKLLRLEVRNAQTPIERKPPWIKTRAKMGPEYTELKGLVRREGLHTVCEEAGCPNIFECWEDREATFLIGGEQCTRRCDFCQIDTGKPADLDRDEPRRVAESVQAMGLRYSTVTGVARDDLPDGGAWLYAETVRYIKRLNPNTGVELLIPDFNGNPEQLEEVFESRPEVLAHNVETVPRIFKRIRPAFRYDRSLAVITAARNFGLVTKSNLILGMGETIDEVRTALRDLHDAGCDIITITQYLRPSPRHHPVERWVHPDEFVELSAYAEGLGFAGVLAGPLVRSSYRAGKLYAQAARVRFADQPPVS.

Positions 55, 60, 66, 81, 85, 88, and 292 each coordinate [4Fe-4S] cluster. Residues 67-281 (WEDREATFLI…SAYAEGLGFA (215 aa)) form the Radical SAM core domain.

It belongs to the radical SAM superfamily. Lipoyl synthase family. [4Fe-4S] cluster is required as a cofactor.

The protein resides in the cytoplasm. The enzyme catalyses [[Fe-S] cluster scaffold protein carrying a second [4Fe-4S](2+) cluster] + N(6)-octanoyl-L-lysyl-[protein] + 2 oxidized [2Fe-2S]-[ferredoxin] + 2 S-adenosyl-L-methionine + 4 H(+) = [[Fe-S] cluster scaffold protein] + N(6)-[(R)-dihydrolipoyl]-L-lysyl-[protein] + 4 Fe(3+) + 2 hydrogen sulfide + 2 5'-deoxyadenosine + 2 L-methionine + 2 reduced [2Fe-2S]-[ferredoxin]. It functions in the pathway protein modification; protein lipoylation via endogenous pathway; protein N(6)-(lipoyl)lysine from octanoyl-[acyl-carrier-protein]: step 2/2. Its function is as follows. Catalyzes the radical-mediated insertion of two sulfur atoms into the C-6 and C-8 positions of the octanoyl moiety bound to the lipoyl domains of lipoate-dependent enzymes, thereby converting the octanoylated domains into lipoylated derivatives. This chain is Lipoyl synthase, found in Mycolicibacterium smegmatis (strain ATCC 700084 / mc(2)155) (Mycobacterium smegmatis).